The chain runs to 292 residues: Ribonuclease HIII (292 aa).

Positions 76 to 292 constitute an RNase H type-2 domain; the sequence is TNLIGTDEVG…TQKAIKIAQL (217 aa). 3 residues coordinate a divalent metal cation: D82, E83, and D186.

The protein belongs to the RNase HII family. RnhC subfamily. It depends on Mn(2+) as a cofactor. Mg(2+) is required as a cofactor.

The protein localises to the cytoplasm. The enzyme catalyses Endonucleolytic cleavage to 5'-phosphomonoester.. Endonuclease that specifically degrades the RNA of RNA-DNA hybrids. In Lactococcus lactis subsp. lactis (strain IL1403) (Streptococcus lactis), this protein is Ribonuclease HIII.